Consider the following 55-residue polypeptide: MYNPPAQQDMSYYDHCTKRHEEKGCLYACIFTALCCFCCYETCECCLDCLCCCCN.

The helical transmembrane segment at 24-40 (GCLYACIFTALCCFCCY) threads the bilayer.

The protein belongs to the CYSTM1 family. In terms of tissue distribution, expressed only in roots.

It localises to the cell membrane. The protein localises to the secreted. Its subcellular location is the cell wall. Confers resistance to heavy metal ions (e.g. cadmium (CdCl(2)) and copper (CuCl(2))) by chelating them at the plasma membrane of root cells, thus stopping their entry and reducing their accumulation. The polypeptide is Protein CADMIUM TOLERANCE 2 (Oryza sativa subsp. japonica (Rice)).